A 1302-amino-acid polypeptide reads, in one-letter code: Regulator of telomere elongation helicase 1 (1302 aa).

Residues 7–297 enclose the Helicase ATP-binding domain; sequence NGVTVDFPFQ…TKTAQQGEPH (291 aa). 42–49 contacts ATP; it reads SHTGTGKT. Cysteine 146, cysteine 164, cysteine 173, and cysteine 208 together coordinate [4Fe-4S] cluster. The short motif at 152–168 is the Nuclear localization signal element; the sequence is KKQESNHIQIHLCRKKV. The short motif at 251-254 is the DEAH box element; the sequence is DEAH. Low complexity predominate over residues 758–767; that stretch reads PAPAPRATAP. Residues 758–819 form a disordered region; sequence PAPAPRATAP…AAGDPESSLC (62 aa). Positions 770-780 are enriched in basic and acidic residues; the sequence is REGEDAVREVK. The Nuclear localization signal signature appears at 873-879; the sequence is PRGGRKK. Disordered regions lie at residues 981 to 1006, 1019 to 1058, 1134 to 1153, and 1160 to 1234; these read RPEHSIPRRQPAQPVLDPTGRTAPDP, DPREHLNQGRPHLSPRPPPTGDPGSHPQWRSGVPRAGKQG, CTDLTGRPYPGMERPGPQEE, and VLTH…QAAG. Positions 1178–1187 are enriched in polar residues; it reads KTQSKISSLL. A PIP-box motif is present at residues 1180 to 1187; that stretch reads QSKISSLL.

The protein belongs to the helicase family. RAD3/XPD subfamily. In terms of assembly, interacts with TERF1. Interacts (via PIP-box) with PCNA; the interaction is direct and essential for suppressing telomere fragility. Interacts with MMS19; the interaction mediates the association of RTEL1 with the cytosolic iron-sulfur protein assembly (CIA) complex.

It localises to the nucleus. The catalysed reaction is ATP + H2O = ADP + phosphate + H(+). Its function is as follows. A probable ATP-dependent DNA helicase implicated in telomere-length regulation, DNA repair and the maintenance of genomic stability. Acts as an anti-recombinase to counteract toxic recombination and limit crossover during meiosis. Regulates meiotic recombination and crossover homeostasis by physically dissociating strand invasion events and thereby promotes noncrossover repair by meiotic synthesis dependent strand annealing (SDSA) as well as disassembly of D loop recombination intermediates. Also disassembles T loops and prevents telomere fragility by counteracting telomeric G4-DNA structures, which together ensure the dynamics and stability of the telomere. This Pongo abelii (Sumatran orangutan) protein is Regulator of telomere elongation helicase 1.